The following is a 418-amino-acid chain: UDP-N-acetylglucosamine 1-carboxyvinyltransferase (418 aa).

22-23 (KN) is a phosphoenolpyruvate binding site. Residue Arg-93 coordinates UDP-N-acetyl-alpha-D-glucosamine. The Proton donor role is filled by Cys-117. At Cys-117 the chain carries 2-(S-cysteinyl)pyruvic acid O-phosphothioketal. UDP-N-acetyl-alpha-D-glucosamine-binding residues include Asp-305 and Val-327.

Belongs to the EPSP synthase family. MurA subfamily.

Its subcellular location is the cytoplasm. It carries out the reaction phosphoenolpyruvate + UDP-N-acetyl-alpha-D-glucosamine = UDP-N-acetyl-3-O-(1-carboxyvinyl)-alpha-D-glucosamine + phosphate. It functions in the pathway cell wall biogenesis; peptidoglycan biosynthesis. In terms of biological role, cell wall formation. Adds enolpyruvyl to UDP-N-acetylglucosamine. The protein is UDP-N-acetylglucosamine 1-carboxyvinyltransferase of Alkalilimnicola ehrlichii (strain ATCC BAA-1101 / DSM 17681 / MLHE-1).